We begin with the raw amino-acid sequence, 672 residues long: tRNA 5-methylaminomethyl-2-thiouridine biosynthesis bifunctional protein MnmC (672 aa).

The segment at 1–241 (MHKVQFADVH…KRECLQGVKA (241 aa)) is tRNA (mnm(5)s(2)U34)-methyltransferase. The segment at 269–672 (IGGGIASVFS…LLKGSQVKQG (404 aa)) is FAD-dependent cmnm(5)s(2)U34 oxidoreductase.

In the N-terminal section; belongs to the methyltransferase superfamily. tRNA (mnm(5)s(2)U34)-methyltransferase family. This sequence in the C-terminal section; belongs to the DAO family. FAD serves as cofactor.

The protein resides in the cytoplasm. It catalyses the reaction 5-aminomethyl-2-thiouridine(34) in tRNA + S-adenosyl-L-methionine = 5-methylaminomethyl-2-thiouridine(34) in tRNA + S-adenosyl-L-homocysteine + H(+). Catalyzes the last two steps in the biosynthesis of 5-methylaminomethyl-2-thiouridine (mnm(5)s(2)U) at the wobble position (U34) in tRNA. Catalyzes the FAD-dependent demodification of cmnm(5)s(2)U34 to nm(5)s(2)U34, followed by the transfer of a methyl group from S-adenosyl-L-methionine to nm(5)s(2)U34, to form mnm(5)s(2)U34. In Pasteurella multocida (strain Pm70), this protein is tRNA 5-methylaminomethyl-2-thiouridine biosynthesis bifunctional protein MnmC.